A 249-amino-acid polypeptide reads, in one-letter code: Large ribosomal subunit protein uL10m (249 aa).

The transit peptide at 1-31 (MLQLRFMPGWVPRNGFFGLKETIGTVHKRFY) directs the protein to the mitochondrion. The tract at residues 226 to 249 (SHNDNQKPKEDVESTTDAESKGSK) is disordered.

The protein belongs to the universal ribosomal protein uL10 family. In terms of assembly, component of the mitochondrial large ribosomal subunit (mt-LSU). Mature yeast 74S mitochondrial ribosomes consist of a small (37S) and a large (54S) subunit. The 37S small subunit contains a 15S ribosomal RNA (15S mt-rRNA) and 34 different proteins. The 54S large subunit contains a 21S rRNA (21S mt-rRNA) and 46 different proteins.

It localises to the mitochondrion. Its function is as follows. Component of the mitochondrial ribosome (mitoribosome), a dedicated translation machinery responsible for the synthesis of mitochondrial genome-encoded proteins, including at least some of the essential transmembrane subunits of the mitochondrial respiratory chain. The mitoribosomes are attached to the mitochondrial inner membrane and translation products are cotranslationally integrated into the membrane. The chain is Large ribosomal subunit protein uL10m (MRPL11) from Saccharomyces cerevisiae (strain ATCC 204508 / S288c) (Baker's yeast).